The following is a 656-amino-acid chain: Leucine aminopeptidase 2 (656 aa).

Substrate-binding positions include 173–175 and 302–307; these read QLE and PYGGME. His331 lines the Zn(2+) pocket. Residue Glu332 is the Proton acceptor of the active site. Zn(2+)-binding residues include His335 and Glu354. Residue Tyr420 is the Proton donor of the active site.

The protein belongs to the peptidase M1 family. Zn(2+) is required as a cofactor.

It localises to the cytoplasm. Its subcellular location is the nucleus. The enzyme catalyses an epoxide + H2O = an ethanediol. Its function is as follows. Aminopeptidase that preferentially cleaves di- and tripeptides. Also has low epoxide hydrolase activity (in vitro). Can hydrolyze the epoxide leukotriene LTA(4) but it forms preferentially 5,6-dihydroxy-7,9,11,14-eicosatetraenoic acid rather than the cytokine leukotriene B(4) as the product compared to the homologous mammalian enzyme (in vitro). In Vanderwaltozyma polyspora (strain ATCC 22028 / DSM 70294 / BCRC 21397 / CBS 2163 / NBRC 10782 / NRRL Y-8283 / UCD 57-17) (Kluyveromyces polysporus), this protein is Leucine aminopeptidase 2.